A 110-amino-acid polypeptide reads, in one-letter code: Integration host factor subunit alpha (110 aa).

The protein belongs to the bacterial histone-like protein family. As to quaternary structure, heterodimer of an alpha and a beta chain.

This protein is one of the two subunits of integration host factor, a specific DNA-binding protein that functions in genetic recombination as well as in transcriptional and translational control. In Methylococcus capsulatus (strain ATCC 33009 / NCIMB 11132 / Bath), this protein is Integration host factor subunit alpha.